A 133-amino-acid chain; its full sequence is Sporulation-specific protein 2 (133 aa).

This sequence belongs to the VPS13 family. In terms of assembly, interacts with spo13 and spo15.

It localises to the cytoplasm. It is found in the cytoskeleton. The protein resides in the microtubule organizing center. Its subcellular location is the spindle pole body. Involved in sporulation. Plays a significant role in modification of the spindle pole body prior to spore formation and is required for initiating forespore membrane formation. Assists in the localization of spo13 to the outer surface of the SPB. The polypeptide is Sporulation-specific protein 2 (spo2) (Schizosaccharomyces pombe (strain 972 / ATCC 24843) (Fission yeast)).